The following is a 1997-amino-acid chain: Nucleoprotein TPR (1997 aa).

4 coiled-coil regions span residues 1–36, 101–277, 335–1103, and 1129–1305; these read QEQHSQLEAAKTQVEKDMGEKISNLERELENANDLL, EIVK…HQMT, DSTE…IKTI, and AEAS…EPQE. 2 stretches are compositionally biased toward basic and acidic residues: residues 672-702 and 1290-1305; these read SSEYQSQLEKKMMESEKEKQELRDEKHKTVE and REQQERHHEQRDEPQE. Disordered stretches follow at residues 672-706, 1290-1352, 1438-1529, 1561-1752, 1795-1832, and 1870-1997; these read SSEYQSQLEKKMMESEKEKQELRDEKHKTVEQMEQ, REQQ…AAVP, AFVQ…KTET, IQTS…RRQS, AIHSPQVAGVPRFRFGPPEDMPQASSSHSDLGQLASQG, and ENPA…RSNI. 3 stretches are compositionally biased toward polar residues: residues 1306-1321, 1328-1347, and 1446-1487; these read TTRIPQQRQITLQPTT, SANTSEPPTANIKPTPSKVT, and SHAT…SSSI. The span at 1511 to 1529 shows a compositional bias: basic and acidic residues; that stretch reads DQQRTKKRKEEDIEEKTET. Over residues 1561 to 1587 the composition is skewed to polar residues; the sequence is IQTSQVIESQAPEQLQNVQSTQDSLQD. Acidic residues-rich tracts occupy residues 1601–1637 and 1644–1667; these read SDEENEDEQEGYEEEEQEDEEEDEDDAGIGEGDDSNE and GNEDYEGDDAEEADGTDPDTETED. Polar residues-rich tracts occupy residues 1692–1709, 1817–1830, and 1879–1899; these read AESTFSQETREQPSSASD, QASSSHSDLGQLAS, and HASQSVPMVTTSTGNVPTSVD. Acidic residues predominate over residues 1902–1915; that stretch reads AADEGDEVFVEAES. The span at 1950–1959 shows a compositional bias: low complexity; sequence SSSIADTSSS.

The protein belongs to the TPR family. Homodimer. Part of the nuclear pore complex (NPC). Interacts with nuclear receptor KPNB1; the interaction occurs in a RanGTP-dependent manner. Associates with the Importin alpha/Importin beta receptor. Expressed in epithelial cells, oocytes and egg (at protein level).

It localises to the nucleus. It is found in the nucleus membrane. The protein resides in the nucleus envelope. The protein localises to the nuclear pore complex. Its subcellular location is the cytoplasm. It localises to the cytoskeleton. It is found in the spindle. The protein resides in the chromosome. The protein localises to the centromere. Its subcellular location is the kinetochore. Its function is as follows. Component of the nuclear pore complex (NPC), a complex required for the trafficking across the nuclear envelope. Functions as a scaffolding element in the nuclear phase of the NPC essential for normal nucleocytoplasmic transport of proteins and mRNAs, plays a role in the establishment of nuclear-peripheral chromatin compartmentalization in interphase, and in the mitotic spindle checkpoint signaling during mitosis. Involved in the quality control and retention of unspliced mRNAs in the nucleus. Implicated in nuclear export of mRNAs transcribed from heat shock gene promoters. May play a limited role in the regulation of nuclear protein export. May be involved in the formation and/or maintenance of NPC-associated perinuclear heterochromatin exclusion zones (HEZs). Finally, may act as a spatial regulator of the spindle-assembly checkpoint (SAC) response. The polypeptide is Nucleoprotein TPR (Xenopus laevis (African clawed frog)).